Here is a 72-residue protein sequence, read N- to C-terminus: Cytochrome b-c1 complex subunit 8-2, mitochondrial (72 aa).

Residues 1 to 41 (MGKQPVKLKAVVYALSPFQQKIMTGLWKDLPEKIHHKVSEN) are Mitochondrial matrix-facing. A helical transmembrane segment spans residues 42–58 (WISTILLVAPVVGTYSY). Topologically, residues 59–72 (AQYFKEQEKLEHRF) are mitochondrial intermembrane.

It belongs to the UQCRQ/QCR8 family. In terms of assembly, component of the ubiquinol-cytochrome c oxidoreductase (cytochrome b-c1 complex, complex III, CIII), a multisubunit enzyme composed of 10 subunits. The complex is composed of 3 respiratory subunits cytochrome b (MT-CYB), cytochrome c1 (CYC1-1 or CYC1-2) and Rieske protein (UCR1-1 or UCR1-2), 2 core protein subunits MPPalpha1 (or MPPalpha2) and MPPB, and 5 low-molecular weight protein subunits QCR7-1 (or QCR7-2), UCRQ-1 (or UCRQ-2), QCR9, UCRY and probably QCR6-1 (or QCR6-2). The complex exists as an obligatory dimer and forms supercomplexes (SCs) in the inner mitochondrial membrane with NADH-ubiquinone oxidoreductase (complex I, CI), resulting in different assemblies (supercomplexes SCI(1)III(2) and SCI(2)III(4)).

The protein resides in the mitochondrion inner membrane. In terms of biological role, component of the ubiquinol-cytochrome c oxidoreductase, a multisubunit transmembrane complex that is part of the mitochondrial electron transport chain which drives oxidative phosphorylation. The respiratory chain contains 3 multisubunit complexes succinate dehydrogenase (complex II, CII), ubiquinol-cytochrome c oxidoreductase (cytochrome b-c1 complex, complex III, CIII) and cytochrome c oxidase (complex IV, CIV), that cooperate to transfer electrons derived from NADH and succinate to molecular oxygen, creating an electrochemical gradient over the inner membrane that drives transmembrane transport and the ATP synthase. The cytochrome b-c1 complex catalyzes electron transfer from ubiquinol to cytochrome c, linking this redox reaction to translocation of protons across the mitochondrial inner membrane, with protons being carried across the membrane as hydrogens on the quinol. In the process called Q cycle, 2 protons are consumed from the matrix, 4 protons are released into the intermembrane space and 2 electrons are passed to cytochrome c. This chain is Cytochrome b-c1 complex subunit 8-2, mitochondrial (UCRQ-2), found in Arabidopsis thaliana (Mouse-ear cress).